Reading from the N-terminus, the 519-residue chain is NADH-ubiquinone oxidoreductase chain 4 (519 aa).

The next 14 helical transmembrane spans lie at 2–22, 68–88, 112–132, 146–166, 167–187, 196–216, 239–259, 270–290, 304–324, 333–353, 360–380, 399–419, 437–457, and 484–504; these read SGLLYALLIIPMIGIFFILSF, IAFITTIMNLIVSLIIYILFD, VDGLSIYFVLLTTIIMPIALI, LIIILLLETLLLAVFLVLDVL, LFYIFFESILPPLFILIGLFG, FYIFLYTLLGSLFLLLSILTM, IFLFLGVFIAFAVKTPTVFLN, PLGGSIVLAGIVLKLSLYGIF, YTSIIFSIGIITIIYASFSTL, IAYSSVSHAAVYLIGVFSNII, ILLGLGHGFVSSGLFICAGGV, VMPLFSILFFILCLGNCGAPL, LPLLGLFSSSSMIFSAAYTIY, and FFLLFTLIIFTIMFGIYPSFI.

Belongs to the complex I subunit 4 family.

Its subcellular location is the mitochondrion membrane. The enzyme catalyses a ubiquinone + NADH + 5 H(+)(in) = a ubiquinol + NAD(+) + 4 H(+)(out). Functionally, core subunit of the mitochondrial membrane respiratory chain NADH dehydrogenase (Complex I) that is believed to belong to the minimal assembly required for catalysis. Complex I functions in the transfer of electrons from NADH to the respiratory chain. The immediate electron acceptor for the enzyme is believed to be ubiquinone. This Podospora anserina (strain S / ATCC MYA-4624 / DSM 980 / FGSC 10383) (Pleurage anserina) protein is NADH-ubiquinone oxidoreductase chain 4 (ND4).